A 578-amino-acid chain; its full sequence is Proline--tRNA ligase (578 aa).

Belongs to the class-II aminoacyl-tRNA synthetase family. ProS type 1 subfamily. Homodimer.

It localises to the cytoplasm. It carries out the reaction tRNA(Pro) + L-proline + ATP = L-prolyl-tRNA(Pro) + AMP + diphosphate. Catalyzes the attachment of proline to tRNA(Pro) in a two-step reaction: proline is first activated by ATP to form Pro-AMP and then transferred to the acceptor end of tRNA(Pro). As ProRS can inadvertently accommodate and process non-cognate amino acids such as alanine and cysteine, to avoid such errors it has two additional distinct editing activities against alanine. One activity is designated as 'pretransfer' editing and involves the tRNA(Pro)-independent hydrolysis of activated Ala-AMP. The other activity is designated 'posttransfer' editing and involves deacylation of mischarged Ala-tRNA(Pro). The misacylated Cys-tRNA(Pro) is not edited by ProRS. This chain is Proline--tRNA ligase, found in Burkholderia cenocepacia (strain ATCC BAA-245 / DSM 16553 / LMG 16656 / NCTC 13227 / J2315 / CF5610) (Burkholderia cepacia (strain J2315)).